A 461-amino-acid polypeptide reads, in one-letter code: Trigger factor (461 aa).

The region spanning 169–256 is the PPIase FKBP-type domain; sequence GDTAVIDFAG…LKDLKIKELP (88 aa). Positions 432–461 are disordered; the sequence is PGEAIEPGSGEDAPPEVAAGATEPEAQPNS.

It belongs to the FKBP-type PPIase family. Tig subfamily.

The protein localises to the cytoplasm. It carries out the reaction [protein]-peptidylproline (omega=180) = [protein]-peptidylproline (omega=0). Functionally, involved in protein export. Acts as a chaperone by maintaining the newly synthesized protein in an open conformation. Functions as a peptidyl-prolyl cis-trans isomerase. The polypeptide is Trigger factor (Gloeobacter violaceus (strain ATCC 29082 / PCC 7421)).